Consider the following 202-residue polypeptide: Dephospho-CoA kinase (202 aa).

One can recognise a DPCK domain in the interval 3–201; the sequence is AIGLTGGIGS…QRYLGFAAAA (199 aa). 11–16 lines the ATP pocket; it reads GSGKTT.

Belongs to the CoaE family.

The protein resides in the cytoplasm. The enzyme catalyses 3'-dephospho-CoA + ATP = ADP + CoA + H(+). Its pathway is cofactor biosynthesis; coenzyme A biosynthesis; CoA from (R)-pantothenate: step 5/5. In terms of biological role, catalyzes the phosphorylation of the 3'-hydroxyl group of dephosphocoenzyme A to form coenzyme A. This is Dephospho-CoA kinase from Burkholderia lata (strain ATCC 17760 / DSM 23089 / LMG 22485 / NCIMB 9086 / R18194 / 383).